A 144-amino-acid chain; its full sequence is Catabolic 3-dehydroquinase (144 aa).

Catalysis depends on Y24, which acts as the Proton acceptor. N76, H82, and D89 together coordinate substrate. H102 functions as the Proton donor in the catalytic mechanism. Residues 103–104 (IT) and R113 each bind substrate.

This sequence belongs to the type-II 3-dehydroquinase family. As to quaternary structure, homododecamer. Adopts a ring-like structure, composed of an arrangement of two hexameric rings stacked on top of one another.

The catalysed reaction is 3-dehydroquinate = 3-dehydroshikimate + H2O. It functions in the pathway aromatic compound metabolism; 3,4-dihydroxybenzoate biosynthesis; 3,4-dihydroxybenzoate from 3-dehydroquinate: step 1/2. Functionally, is involved in the catabolism of quinate. Allows the utilization of quinate as carbon source via the beta-ketoadipate pathway. The polypeptide is Catabolic 3-dehydroquinase (Debaryomyces hansenii (strain ATCC 36239 / CBS 767 / BCRC 21394 / JCM 1990 / NBRC 0083 / IGC 2968) (Yeast)).